The primary structure comprises 184 residues: NADH-quinone oxidoreductase subunit B (184 aa).

Residues cysteine 63, cysteine 64, cysteine 128, and cysteine 158 each contribute to the [4Fe-4S] cluster site.

Belongs to the complex I 20 kDa subunit family. As to quaternary structure, NDH-1 is composed of 14 different subunits. Subunits NuoB, C, D, E, F, and G constitute the peripheral sector of the complex. The cofactor is [4Fe-4S] cluster.

Its subcellular location is the cell inner membrane. The catalysed reaction is a quinone + NADH + 5 H(+)(in) = a quinol + NAD(+) + 4 H(+)(out). In terms of biological role, NDH-1 shuttles electrons from NADH, via FMN and iron-sulfur (Fe-S) centers, to quinones in the respiratory chain. The immediate electron acceptor for the enzyme in this species is believed to be ubiquinone. Couples the redox reaction to proton translocation (for every two electrons transferred, four hydrogen ions are translocated across the cytoplasmic membrane), and thus conserves the redox energy in a proton gradient. The chain is NADH-quinone oxidoreductase subunit B from Xanthomonas oryzae pv. oryzae (strain MAFF 311018).